Here is a 620-residue protein sequence, read N- to C-terminus: Dihydroxy-acid dehydratase (620 aa).

A Mg(2+)-binding site is contributed by Asp-82. Cys-123 provides a ligand contact to [2Fe-2S] cluster. 2 residues coordinate Mg(2+): Asp-124 and Lys-125. At Lys-125 the chain carries N6-carboxylysine. Cys-197 provides a ligand contact to [2Fe-2S] cluster. Glu-493 serves as a coordination point for Mg(2+). Ser-519 functions as the Proton acceptor in the catalytic mechanism.

It belongs to the IlvD/Edd family. As to quaternary structure, homodimer. [2Fe-2S] cluster is required as a cofactor. The cofactor is Mg(2+).

It catalyses the reaction (2R)-2,3-dihydroxy-3-methylbutanoate = 3-methyl-2-oxobutanoate + H2O. The enzyme catalyses (2R,3R)-2,3-dihydroxy-3-methylpentanoate = (S)-3-methyl-2-oxopentanoate + H2O. It participates in amino-acid biosynthesis; L-isoleucine biosynthesis; L-isoleucine from 2-oxobutanoate: step 3/4. The protein operates within amino-acid biosynthesis; L-valine biosynthesis; L-valine from pyruvate: step 3/4. Functionally, functions in the biosynthesis of branched-chain amino acids. Catalyzes the dehydration of (2R,3R)-2,3-dihydroxy-3-methylpentanoate (2,3-dihydroxy-3-methylvalerate) into 2-oxo-3-methylpentanoate (2-oxo-3-methylvalerate) and of (2R)-2,3-dihydroxy-3-methylbutanoate (2,3-dihydroxyisovalerate) into 2-oxo-3-methylbutanoate (2-oxoisovalerate), the penultimate precursor to L-isoleucine and L-valine, respectively. This Bifidobacterium longum subsp. infantis (strain ATCC 15697 / DSM 20088 / JCM 1222 / NCTC 11817 / S12) protein is Dihydroxy-acid dehydratase.